A 231-amino-acid polypeptide reads, in one-letter code: Acyl-protein thioesterase 2 (231 aa).

The S-palmitoyl cysteine moiety is linked to residue cysteine 2. A Phosphoserine modification is found at serine 82. Active-site charge relay system residues include serine 122, aspartate 176, and histidine 210.

The protein belongs to the AB hydrolase superfamily. AB hydrolase 2 family.

The protein localises to the cytoplasm. The enzyme catalyses S-hexadecanoyl-L-cysteinyl-[protein] + H2O = L-cysteinyl-[protein] + hexadecanoate + H(+). It catalyses the reaction prostaglandin E2 1-glyceryl ester + H2O = prostaglandin E2 + glycerol + H(+). It carries out the reaction 1-hexadecanoyl-sn-glycero-3-phosphocholine + H2O = sn-glycerol 3-phosphocholine + hexadecanoate + H(+). The catalysed reaction is 1-octadecanoyl-sn-glycero-3-phosphocholine + H2O = octadecanoate + sn-glycerol 3-phosphocholine + H(+). The enzyme catalyses 1-hexadecanoyl-sn-glycero-3-phosphate + H2O = sn-glycerol 3-phosphate + hexadecanoate + H(+). It catalyses the reaction 1-hexadecanoyl-sn-glycero-3-phospho-L-serine + H2O = sn-glycero-3-phospho-L-serine + hexadecanoate + H(+). Acts as an acyl-protein thioesterase hydrolyzing fatty acids from S-acylated cysteine residues in proteins such as trimeric G alpha proteins, GSDMD, GAP43, ZDHHC6 or HRAS. Deacylates GAP43. Mediates depalmitoylation of ZDHHC6. Has lysophospholipase activity. Hydrolyzes prostaglandin glycerol esters (PG-Gs) in the following order prostaglandin D2-glycerol ester (PGD2-G) &gt; prostaglandin E2 glycerol ester (PGE2-G) &gt; prostaglandin F2-alpha-glycerol ester (PGF2-alpha-G). Hydrolyzes 1-arachidonoylglycerol but not 2-arachidonoylglycerol or arachidonoylethanolamide. This is Acyl-protein thioesterase 2 (Lypla2) from Rattus norvegicus (Rat).